The primary structure comprises 281 residues: Phosphatidylglycerol--prolipoprotein diacylglyceryl transferase (281 aa).

3 helical membrane passes run 11 to 31 (IIFT…VISF), 57 to 77 (LLYS…IIFY), and 89 to 109 (VFYI…AIIV). Position 140 (Arg140) interacts with a 1,2-diacyl-sn-glycero-3-phospho-(1'-sn-glycerol). The next 3 membrane-spanning stretches (helical) occupy residues 194–214 (PTQL…IYFF), 222–242 (GSIS…IEFF), and 255–275 (IITM…IIMY).

The protein belongs to the Lgt family.

Its subcellular location is the cell inner membrane. The enzyme catalyses L-cysteinyl-[prolipoprotein] + a 1,2-diacyl-sn-glycero-3-phospho-(1'-sn-glycerol) = an S-1,2-diacyl-sn-glyceryl-L-cysteinyl-[prolipoprotein] + sn-glycerol 1-phosphate + H(+). Its pathway is protein modification; lipoprotein biosynthesis (diacylglyceryl transfer). Functionally, catalyzes the transfer of the diacylglyceryl group from phosphatidylglycerol to the sulfhydryl group of the N-terminal cysteine of a prolipoprotein, the first step in the formation of mature lipoproteins. This is Phosphatidylglycerol--prolipoprotein diacylglyceryl transferase from Buchnera aphidicola subsp. Acyrthosiphon pisum (strain APS) (Acyrthosiphon pisum symbiotic bacterium).